Consider the following 637-residue polypeptide: Sodium-dependent proline transporter (637 aa).

The Cytoplasmic segment spans residues 1–45 (MKKLQEAHLRKPVTPDLLMTPSDQGDVDLDVDFAADRGNWTGKLD). Threonine 20 is modified (phosphothreonine). Phosphoserine is present on serine 22. Helical transmembrane passes span 46–66 (FLLS…FPYR), 74–93 (AFLV…LFFL), and 117–137 (GAGA…NMII). Residues 138 to 214 (AYVLFYLFAS…QGIGRPGEIR (77 aa)) are Extracellular-facing. An N-linked (GlcNAc...) asparagine glycan is attached at asparagine 182. The next 9 helical transmembrane spans lie at 215 to 233 (WNLC…LCIL), 242 to 259 (VVYF…MLLV), 295 to 312 (IFYS…FASY), 324 to 345 (FIVT…FSVL), 378 to 397 (LPLS…TLGL), 425 to 443 (VFSG…ILTT), 459 to 479 (SFGL…VYGI), 500 to 519 (ACWL…YSIV), and 538 to 556 (LGIL…GMLV). The Cytoplasmic segment spans residues 557–637 (AVLREEGSLW…IAEEEEESMM (81 aa)). Phosphoserine occurs at positions 573 and 582. Threonine 588 is subject to Phosphothreonine. The residue at position 591 (tyrosine 591) is a Phosphotyrosine. Phosphoserine occurs at positions 598 and 600.

Belongs to the sodium:neurotransmitter symporter (SNF) (TC 2.A.22) family. SLC6A7 subfamily. As to expression, expressed in subpopulations of putative glutamatergic pathways of rat brain.

The protein localises to the synaptic cell membrane. It catalyses the reaction L-proline(out) + chloride(out) + 2 Na(+)(out) = L-proline(in) + chloride(in) + 2 Na(+)(in). It carries out the reaction L-pipecolate(out) + chloride(out) + 2 Na(+)(out) = L-pipecolate(in) + chloride(in) + 2 Na(+)(in). Its function is as follows. Brain specific sodium (and chloride)-dependent proline transporter. Terminates the action of proline by its high affinity sodium-dependent reuptake into presynaptic terminals. The chain is Sodium-dependent proline transporter (Slc6a7) from Rattus norvegicus (Rat).